The chain runs to 318 residues: Endochitinase 3 (318 aa).

A signal peptide spans 1-18 (EFTIFSLLFSLLLLNASA). The region spanning 19–60 (EQCGSQAGGALCAPGLCCSKFGWCGNTNDYCGPGNCQSQCPG) is the Chitin-binding type-1 domain. 7 cysteine pairs are disulfide-bonded: Cys21/Cys36, Cys30/Cys42, Cys35/Cys49, Cys54/Cys58, Cys89/Cys152, Cys164/Cys172, and Cys271/Cys303. The active-site Proton donor is the Glu134. The propeptide at 312–318 (GLLVDTV) is removed in mature form, vacuolar targeting.

Belongs to the glycosyl hydrolase 19 family. Chitinase class I subfamily.

Its subcellular location is the vacuole. The catalysed reaction is Random endo-hydrolysis of N-acetyl-beta-D-glucosaminide (1-&gt;4)-beta-linkages in chitin and chitodextrins.. Its function is as follows. Defense against chitin-containing fungal pathogens. In Solanum tuberosum (Potato), this protein is Endochitinase 3 (CHTB3).